Consider the following 296-residue polypeptide: Tyrosine recombinase XerC (296 aa).

The Core-binding (CB) domain occupies 1–84 (MNKIQESFLY…TLRSFYEFWM (84 aa)). Residues 105–286 (YLPHFFYEEE…SNQQLRKVYL (182 aa)) form the Tyr recombinase domain. Active-site residues include arginine 145, lysine 169, histidine 238, arginine 241, and histidine 264. Catalysis depends on tyrosine 273, which acts as the O-(3'-phospho-DNA)-tyrosine intermediate.

Belongs to the 'phage' integrase family. XerC subfamily. In terms of assembly, forms a cyclic heterotetrameric complex composed of two molecules of XerC and two molecules of XerD.

It is found in the cytoplasm. In terms of biological role, site-specific tyrosine recombinase, which acts by catalyzing the cutting and rejoining of the recombining DNA molecules. The XerC-XerD complex is essential to convert dimers of the bacterial chromosome into monomers to permit their segregation at cell division. It also contributes to the segregational stability of plasmids. The polypeptide is Tyrosine recombinase XerC (Staphylococcus carnosus (strain TM300)).